The following is a 370-amino-acid chain: Vasopressin V2 receptor (370 aa).

Residues 1-28 (MLRATTSAVPRALSWPAAPGNGSEREPL) form a disordered region. At 1–37 (MLRATTSAVPRALSWPAAPGNGSEREPLDDRDPLLAR) the chain is on the extracellular side. An N-linked (GlcNAc...) asparagine glycan is attached at Asn21. The chain crosses the membrane as a helical span at residues 38–62 (VELALLSTVFVAVALSNGLVLGALV). Topologically, residues 63 to 76 (RRGRRGRWAPMHVF) are cytoplasmic. The chain crosses the membrane as a helical span at residues 77–97 (IGHLCLADLAVALFQVLPQLA). At 98 to 112 (WDATYRFRGPDALCR) the chain is on the extracellular side. Residues 113-134 (AVKYLQMVGMYASSYMILAMTL) traverse the membrane as a helical segment. Residues 135-158 (DRHRAICRPMLAYRHGGGARWNRP) lie on the Cytoplasmic side of the membrane. Residues 159–179 (VLVAWAFSLLLSLPQLFIFAQ) traverse the membrane as a helical segment. Residues 180-199 (RDVGDGSGVLDCWASFAEPW) lie on the Extracellular side of the membrane. A helical transmembrane segment spans residues 200-219 (GLRAYVTWIALMVFVAPALG). Residues 220 to 270 (IAACQVLIFREIHTSLVPGPAERAGGHRGGRRAGSPREGARVSAAMAKTAR) lie on the Cytoplasmic side of the membrane. The helical transmembrane segment at 271 to 292 (MTLVIVAVYVLCWAPFFLVQLW) threads the bilayer. The Extracellular segment spans residues 293–307 (SVWDPKAPREGPPFV). Residues 308 to 327 (LLMLLASLNSCTNPWIYASF) form a helical membrane-spanning segment. Residues 328 to 370 (SSSISSELRSLLCCPRRRTPPSLRPQEESCATASSFSARDTSS) are Cytoplasmic-facing. S-palmitoyl cysteine attachment occurs at residues Cys340 and Cys341. Positions 347 to 370 (PPSLRPQEESCATASSFSARDTSS) are disordered. The segment covering 356-370 (SCATASSFSARDTSS) has biased composition (polar residues).

This sequence belongs to the G-protein coupled receptor 1 family. Vasopressin/oxytocin receptor subfamily. In terms of assembly, interacts with ARRDC4. Identified in a complex containing at least ARRDC4, V2R and HGS. Interacts with TMEM147.

Its subcellular location is the cell membrane. Functionally, receptor for arginine vasopressin. The activity of this receptor is mediated by G proteins which activate adenylate cyclase. Involved in renal water reabsorption. The protein is Vasopressin V2 receptor (AVPR2) of Sus scrofa (Pig).